Here is a 188-residue protein sequence, read N- to C-terminus: Adenylate kinase (188 aa).

12 to 17 (GSGKTT) contacts ATP. The segment at 33–62 (STGDLLRAEVASGSELGKKIDSFISKGNLV) is NMP. AMP-binding positions include T34, R39, 60–62 (NLV), 87–90 (GYPR), and Q94. Residues 129-135 (GRARGAD) are LID. ATP is bound at residue R130. Residues R132 and R144 each coordinate AMP. R172 is a binding site for ATP.

The protein belongs to the adenylate kinase family. In terms of assembly, monomer.

Its subcellular location is the cytoplasm. The catalysed reaction is AMP + ATP = 2 ADP. The protein operates within purine metabolism; AMP biosynthesis via salvage pathway; AMP from ADP: step 1/1. Functionally, catalyzes the reversible transfer of the terminal phosphate group between ATP and AMP. Plays an important role in cellular energy homeostasis and in adenine nucleotide metabolism. In Campylobacter curvus (strain 525.92), this protein is Adenylate kinase.